The chain runs to 161 residues: UPF0225 protein HI_0277 (161 aa).

The protein belongs to the UPF0225 family.

In Haemophilus influenzae (strain ATCC 51907 / DSM 11121 / KW20 / Rd), this protein is UPF0225 protein HI_0277.